The chain runs to 571 residues: Urease subunit alpha (571 aa).

A Urease domain is found at Gly134–Phe571. Ni(2+)-binding residues include His139, His141, and Lys222. Lys222 carries the post-translational modification N6-carboxylysine. His224 contacts substrate. The Ni(2+) site is built by His251 and His277. His325 acts as the Proton donor in catalysis. Asp365 provides a ligand contact to Ni(2+).

Belongs to the metallo-dependent hydrolases superfamily. Urease alpha subunit family. In terms of assembly, heterotrimer of UreA (gamma), UreB (beta) and UreC (alpha) subunits. Three heterotrimers associate to form the active enzyme. It depends on Ni cation as a cofactor. In terms of processing, carboxylation allows a single lysine to coordinate two nickel ions.

Its subcellular location is the cytoplasm. The enzyme catalyses urea + 2 H2O + H(+) = hydrogencarbonate + 2 NH4(+). The protein operates within nitrogen metabolism; urea degradation; CO(2) and NH(3) from urea (urease route): step 1/1. In Bordetella pertussis (strain Tohama I / ATCC BAA-589 / NCTC 13251), this protein is Urease subunit alpha.